Consider the following 672-residue polypeptide: Synaptotagmin-like protein 4 (672 aa).

The 119-residue stretch at 4-122 (ILDLSFLSEM…KATGDWFYDQ (119 aa)) folds into the RabBD domain. The FYVE-type zinc-finger motif lies at 63 to 105 (CARCQEGLGRLISKSNTCVGCNHLVCRECRVLESNGSWRCKVC). The segment at 199–222 (SESLDSYTADSDSTSRRDSLDKSG) is disordered. Ser201, Ser204, Ser217, Ser221, and Ser274 each carry phosphoserine. In terms of domain architecture, C2 1 spans 357–479 (VTGKIAFSLK…KLDKKLDHCL (123 aa)). The residue at position 489 (Ser489) is a Phosphoserine. In terms of domain architecture, C2 2 spans 508–634 (PASKLPVGGD…ISSGEVVDWM (127 aa)).

Part of a ternary complex containing STX1A and RAB27A. Can bind both dominant negative and dominant active mutants of RAB27A. Binds STXBP1, RAB3A, RAB8A and RAB27B. Interacts with MYO5A. Detected in insulin-secreting cell lines.

It localises to the membrane. It is found in the cytoplasmic vesicle. The protein localises to the secretory vesicle membrane. In terms of biological role, modulates exocytosis of dense-core granules and secretion of hormones in the pancreas and the pituitary. Interacts with vesicles containing negatively charged phospholipids in a Ca(2+)-independent manner. This is Synaptotagmin-like protein 4 (Sytl4) from Rattus norvegicus (Rat).